Here is a 285-residue protein sequence, read N- to C-terminus: Glutamate racemase (285 aa).

Residues 30–31 (DS) and 62–63 (YG) each bind substrate. The active-site Proton donor/acceptor is Cys-94. 95-96 (NT) provides a ligand contact to substrate. The Proton donor/acceptor role is filled by Cys-206. Substrate is bound at residue 207–208 (TH).

This sequence belongs to the aspartate/glutamate racemases family.

It catalyses the reaction L-glutamate = D-glutamate. It functions in the pathway cell wall biogenesis; peptidoglycan biosynthesis. Functionally, provides the (R)-glutamate required for cell wall biosynthesis. The polypeptide is Glutamate racemase (Pectobacterium atrosepticum (strain SCRI 1043 / ATCC BAA-672) (Erwinia carotovora subsp. atroseptica)).